The chain runs to 155 residues: Fibroblast growth factor 1 (155 aa).

The propeptide occupies 1–15 (MAEGEITTFTALTER). Residue N33 participates in heparin binding. Residues 127 to 143 (KKNGNSKLGPRTHYGQK) form a heparin-binding region.

Belongs to the heparin-binding growth factors family.

The protein localises to the secreted. Its subcellular location is the cytoplasm. It is found in the cell cortex. The protein resides in the cytosol. It localises to the nucleus. Plays an important role in the regulation of cell survival, cell division, angiogenesis, cell differentiation and cell migration. Functions as a potent mitogen in vitro. Acts as a ligand for FGFR1 and integrins. Binds to FGFR1 in the presence of heparin leading to FGFR1 dimerization and activation via sequential autophosphorylation on tyrosine residues which act as docking sites for interacting proteins, leading to the activation of several signaling cascades. Binds to integrins. Its binding to integrins and subsequent ternary complex formation with integrins and FGFR1 are essential for FGF1 signaling. The sequence is that of Fibroblast growth factor 1 (FGF1) from Gallus gallus (Chicken).